A 307-amino-acid chain; its full sequence is Ribosomal protein L11 methyltransferase (307 aa).

Residues Thr162, Gly183, Asp205, and Asn244 each coordinate S-adenosyl-L-methionine.

It belongs to the methyltransferase superfamily. PrmA family.

The protein localises to the cytoplasm. The catalysed reaction is L-lysyl-[protein] + 3 S-adenosyl-L-methionine = N(6),N(6),N(6)-trimethyl-L-lysyl-[protein] + 3 S-adenosyl-L-homocysteine + 3 H(+). Functionally, methylates ribosomal protein L11. The sequence is that of Ribosomal protein L11 methyltransferase from Bordetella parapertussis (strain 12822 / ATCC BAA-587 / NCTC 13253).